We begin with the raw amino-acid sequence, 122 residues long: UPF0102 protein Mpe_A3766 (122 aa).

The protein belongs to the UPF0102 family.

The protein is UPF0102 protein Mpe_A3766 of Methylibium petroleiphilum (strain ATCC BAA-1232 / LMG 22953 / PM1).